The chain runs to 210 residues: MADAKELKSVLIGPIVSNNPIALQILGVCSALAVTSKMETALVMTIALTAVCALSNLFISLIRNHIPSSVRIIVQMTIIASLVIVVDQVLQAYAYDVAKQLSVFVGLIITNCIVMGRAEAFAMKTPPMMSFMDGLGNGLGYGAILLSVGFVRELFGNGSLFGIEILSKISDGGWYQPNGLLLLPPSAFFLIGALIWIIRVMKPEQVEAKG.

The next 6 helical transmembrane spans lie at 9–29 (SVLI…LGVC), 42–62 (LVMT…ISLI), 72–92 (IIVQ…VLQA), 103–123 (VFVG…AFAM), 131–151 (FMDG…VGFV), and 178–198 (NGLL…IWII).

It belongs to the NqrDE/RnfAE family. In terms of assembly, composed of six subunits; NqrA, NqrB, NqrC, NqrD, NqrE and NqrF.

The protein localises to the cell inner membrane. The catalysed reaction is a ubiquinone + n Na(+)(in) + NADH + H(+) = a ubiquinol + n Na(+)(out) + NAD(+). NQR complex catalyzes the reduction of ubiquinone-1 to ubiquinol by two successive reactions, coupled with the transport of Na(+) ions from the cytoplasm to the periplasm. NqrA to NqrE are probably involved in the second step, the conversion of ubisemiquinone to ubiquinol. In Shewanella piezotolerans (strain WP3 / JCM 13877), this protein is Na(+)-translocating NADH-quinone reductase subunit D.